The following is a 37-amino-acid chain: Large ribosomal subunit protein bL36 (37 aa).

Belongs to the bacterial ribosomal protein bL36 family.

The sequence is that of Large ribosomal subunit protein bL36 from Colwellia psychrerythraea (strain 34H / ATCC BAA-681) (Vibrio psychroerythus).